A 620-amino-acid polypeptide reads, in one-letter code: Long-chain fatty acid transport protein 2 (620 aa).

Residues methionine 1 to alanine 4 are Lumenal-facing. A helical membrane pass occupies residues isoleucine 5 to phenylalanine 27. Over glutamine 28–cysteine 106 the chain is Cytoplasmic. Residues valine 107–leucine 127 form a helical membrane-spanning segment. Residues glycine 128–tyrosine 261 are Lumenal-facing. Tyrosine 222–lysine 233 contributes to the AMP binding site. The chain crosses the membrane as a helical span at residues isoleucine 262–alanine 282. Residues glycine 283–leucine 620 lie on the Cytoplasmic side of the membrane. The residue at position 291 (lysine 291) is an N6-acetyllysine. The residue at position 577 (threonine 577) is a Phosphothreonine.

Belongs to the ATP-dependent AMP-binding enzyme family. Expressed in liver, kidney, placenta, intestine, brain, heart, and colon. Predominantly expressed in liver. As to expression, expressed in liver, placenta, and intestine, but much lower relative to isoform 1.

Its subcellular location is the endoplasmic reticulum membrane. It is found in the peroxisome membrane. The protein resides in the cell membrane. The protein localises to the microsome. The catalysed reaction is a fatty acid(in) = a fatty acid(out). It catalyses the reaction (9Z)-octadecenoate(out) = (9Z)-octadecenoate(in). It carries out the reaction a long-chain fatty acid + ATP + CoA = a long-chain fatty acyl-CoA + AMP + diphosphate. The enzyme catalyses (5Z,8Z,11Z,14Z)-eicosatetraenoate + ATP + CoA = (5Z,8Z,11Z,14Z)-eicosatetraenoyl-CoA + AMP + diphosphate. The catalysed reaction is hexadecanoate + ATP + CoA = hexadecanoyl-CoA + AMP + diphosphate. It catalyses the reaction (9Z)-octadecenoate + ATP + CoA = (9Z)-octadecenoyl-CoA + AMP + diphosphate. It carries out the reaction 3,7,11,15-tetramethylhexadecanoate + ATP + CoA = phytanoyl-CoA + AMP + diphosphate. The enzyme catalyses (9Z,12Z,15Z)-octadecatrienoate + ATP + CoA = (9Z,12Z,15Z)-octadecatrienoyl-CoA + AMP + diphosphate. The catalysed reaction is 2,6,10,14-tetramethylpentadecanoate + ATP + CoA = pristanoyl-CoA + AMP + diphosphate. It catalyses the reaction (E)-hexadec-2-enoate + ATP + CoA = (2E)-hexadecenoyl-CoA + AMP + diphosphate. It carries out the reaction a very long-chain fatty acid + ATP + CoA = a very long-chain fatty acyl-CoA + AMP + diphosphate. The enzyme catalyses tetracosanoate + ATP + CoA = tetracosanoyl-CoA + AMP + diphosphate. The catalysed reaction is (4Z,7Z,10Z,13Z,16Z,19Z)-docosahexaenoate + ATP + CoA = (4Z,7Z,10Z,13Z,16Z,19Z)-docosahexaenoyl-CoA + AMP + diphosphate. It catalyses the reaction (25R)-3alpha,7alpha,12alpha-trihydroxy-5beta-cholestan-26-oate + ATP + CoA = (25R)-3alpha,7alpha,12alpha-trihydroxy-5beta-cholestan-26-oyl-CoA + AMP + diphosphate. Its function is as follows. Mediates the import of long-chain fatty acids (LCFA) into the cell by facilitating their transport across cell membranes, playing an important role in hepatic fatty acid uptake. Also functions as an acyl-CoA ligase catalyzing the ATP-dependent formation of fatty acyl-CoA using LCFA and very-long-chain fatty acids (VLCFA) as substrates, which prevents fatty acid efflux from cells and might drive more fatty acid uptake. Plays a pivotal role in regulating available LCFA substrates from exogenous sources in tissues undergoing high levels of beta-oxidation or triglyceride synthesis. Can also activate branched-chain fatty acids such as phytanic acid and pristanic acid. May contribute to the synthesis of sphingosine-1-phosphate. Does not activate C24 bile acids, cholate and chenodeoxycholate. In vitro, activates 3-alpha,7-alpha,12-alpha-trihydroxy-5-beta-cholestanate (THCA), the C27 precursor of cholic acid deriving from the de novo synthesis from cholesterol. However, it is not critical for THCA activation and bile synthesis in vivo. Functionally, exhibits both long-chain fatty acids (LCFA) transport activity and acyl CoA synthetase towards very long-chain fatty acids. Shows a preference for generating CoA derivatives of n-3 fatty acids, which are preferentially trafficked into phosphatidylinositol. In terms of biological role, exhibits long-chain fatty acids (LCFA) transport activity but lacks acyl CoA synthetase towards very long-chain fatty acids. The chain is Long-chain fatty acid transport protein 2 (SLC27A2) from Homo sapiens (Human).